Consider the following 590-residue polypeptide: EGF-like and EMI domain-containing protein 1 (590 aa).

The N-terminal stretch at 1–23 (MTSPLCFWCFCVWAAANWPPGSA) is a signal peptide. One can recognise an EMI domain in the interval 44–104 (LSRPCAQAFI…RCCPGWIQWD (61 aa)). An EGF-like 1 domain is found at 105-145 (DEPGCFSSLSSLGTHFSGRECSYQDTRQCLCSQGFHGPHCQ). 11 disulfide bridges follow: Cys109/Cys125, Cys135/Cys144, Cys168/Cys179, Cys175/Cys188, Cys190/Cys203, Cys209/Cys219, Cys215/Cys228, Cys230/Cys243, Cys249/Cys260, Cys256/Cys269, and Cys271/Cys284. One can recognise an EGF-like 2; calcium-binding domain in the interval 164–204 (NVDECAVVNGGCQQRCINTLGTFHCECDTGYRRHADERTCI). Positions 205-244 (KTDPCAGANGCAHLCQTENGMARCACHAGYQLSEDKKACE) constitute an EGF-like 3 domain. The EGF-like 4; calcium-binding domain maps to 245–285 (DINECAGELAPCAHHCVNSKGSFTCTCHPGFELGADRKHCY). The segment at 393-424 (RLAQNPPQPFPYLDPSLTASYEDEDNDDADSE) is disordered. Residues 413 to 424 (YEDEDNDDADSE) show a composition bias toward acidic residues. In terms of domain architecture, EGF-like 5 spans 445-481 (FGLDCSLSCEDCMNGGRCQEGKSGCLCPAEWTGLICN). 3 disulfide bridges follow: Cys449-Cys462, Cys456-Cys469, and Cys471-Cys480.

This is EGF-like and EMI domain-containing protein 1 (Egfem1) from Mus musculus (Mouse).